Consider the following 354-residue polypeptide: Replication-associated protein (354 aa).

Residues 11 to 114 (SHRSPNTFLT…PLALFERGTF (104 aa)) form the CRESS-DNA virus Rep endonuclease domain. The short motif at 18–21 (FLTY) is the RCR-1 element. A divalent metal cation contacts are provided by glutamate 52 and histidine 62. An RCR-2 motif is present at residues 60–65 (CLHALI). Tyrosine 100 functions as the For DNA cleavage activity in the catalytic mechanism. Residues 100-103 (YITK) carry the RCR-3 motif. Glutamate 104 contributes to the a divalent metal cation binding site. Positions 175–187 (SANKLFPDIQEEF) are oligomerization. Residue 228 to 235 (GPTRTGKS) coordinates ATP. Residues 251–269 (VDWSSYNEDTIYNIVDDIP) are transactivation. A Nuclear localization signal motif is present at residues 291 to 302 (KYGKKKKVQMKS).

The protein belongs to the geminiviridae Rep protein family. Homooligomer. Rep binds to repeated DNA motifs (iterons). Forms the O-complex, which is a Rep-DNA complex involved in the initiation of RCR. Part of the C- and V-complexes which are RepA-Rep-DNA complexes involved in the c-sense and v-sense transcription. Requires Mg(2+) as cofactor. It depends on Mn(2+) as a cofactor.

Its subcellular location is the host nucleus. Functionally, essential for the replication of viral ssDNA. The closed circular ssDNA genome is first converted to a superhelical dsDNA. Rep binds a specific region at the genome origin of replication. It introduces an endonucleolytic nick within the conserved sequence 5'-TAATATTAC-3' in the intergenic region of the genome present in all geminiviruses, thereby initiating the rolling circle replication (RCR). Following cleavage, binds covalently to the 5'-phosphate of DNA as a tyrosyl ester. The cleavage gives rise to a free 3'-OH that serves as a primer for the cellular DNA polymerase. The polymerase synthesizes the (+) strand DNA by rolling circle mechanism. After one round of replication, a Rep-catalyzed nucleotidyl transfer reaction releases a circular single-stranded virus genome, thereby terminating the replication. Displays origin-specific DNA cleavage, nucleotidyl transferase, ATPase and helicase activities. Acts as an inhibitor of C-sense gene transcription. The sequence is that of Replication-associated protein from Maize streak virus genotype C (isolate Set) (MSV).